The primary structure comprises 486 residues: Cardiolipin synthase A (486 aa).

2 helical membrane passes run 3–23 and 38–58; these read TFYT…IAGV and MAWL…YLSF. 2 PLD phosphodiesterase domains span residues 219–246 and 399–426; these read MDLR…VDPR and EGGL…DMRS. Residues His-224, Lys-226, Asp-231, His-404, Lys-406, and Asp-411 contribute to the active site.

Belongs to the phospholipase D family. Cardiolipin synthase subfamily. ClsA sub-subfamily.

It is found in the cell inner membrane. It catalyses the reaction 2 a 1,2-diacyl-sn-glycero-3-phospho-(1'-sn-glycerol) = a cardiolipin + glycerol. In terms of biological role, catalyzes the reversible phosphatidyl group transfer from one phosphatidylglycerol molecule to another to form cardiolipin (CL) (diphosphatidylglycerol) and glycerol. This is Cardiolipin synthase A from Citrobacter koseri (strain ATCC BAA-895 / CDC 4225-83 / SGSC4696).